Consider the following 799-residue polypeptide: Disintegrin and metalloproteinase domain-containing protein B (799 aa).

The signal sequence occupies residues 1–23 (MKAFSCLLSVIATAASLFQHVDA). Over 24-707 (RSHARDKLNN…VSDWVSRHKP (684 aa)) the chain is Extracellular. Asn-33, Asn-227, Asn-228, Asn-314, and Asn-408 each carry an N-linked (GlcNAc...) asparagine glycan. Residues 272-511 (KVALIGVVAD…RTILTSCLTT (240 aa)) form the Peptidase M12B domain. Cystine bridges form between Cys-396–Cys-496, Cys-449–Cys-460, and Cys-581–Cys-601. Zn(2+) is bound at residue His-432. The active site involves Glu-433. The Zn(2+) site is built by His-436 and His-442. In terms of domain architecture, Disintegrin spans 520–609 (GQQCGNGIVE…DCPHDIHSKD (90 aa)). A helical transmembrane segment spans residues 708 to 728 (IVIGVAVGAGCLLLLAIASCI). Topologically, residues 729-799 (CGRSRRQRPR…PGHLPSTRYA (71 aa)) are cytoplasmic. Residues 753–799 (VYNGWNGAPPNAQQSSPGGHPPYNNIPPPINAPPPAYPGHLPSTRYA) are disordered. Pro residues predominate over residues 776–789 (NNIPPPINAPPPAY).

Zn(2+) is required as a cofactor.

The protein localises to the membrane. In terms of biological role, probable zinc protease. The polypeptide is Disintegrin and metalloproteinase domain-containing protein B (ADM-B) (Arthroderma benhamiae (strain ATCC MYA-4681 / CBS 112371) (Trichophyton mentagrophytes)).